Consider the following 190-residue polypeptide: Small ribosomal subunit protein eS7 (190 aa).

The protein belongs to the eukaryotic ribosomal protein eS7 family. Component of the small ribosomal subunit. Part of the small subunit (SSU) processome, composed of more than 70 proteins and the RNA chaperone small nucleolar RNA (snoRNA) U3.

Its subcellular location is the cytoplasm. It is found in the cytoskeleton. The protein resides in the microtubule organizing center. The protein localises to the centrosome. It localises to the nucleus. Its subcellular location is the nucleolus. Functionally, component of the small ribosomal subunit. The ribosome is a large ribonucleoprotein complex responsible for the synthesis of proteins in the cell. Required for rRNA maturation. Part of the small subunit (SSU) processome, first precursor of the small eukaryotic ribosomal subunit. During the assembly of the SSU processome in the nucleolus, many ribosome biogenesis factors, an RNA chaperone and ribosomal proteins associate with the nascent pre-rRNA and work in concert to generate RNA folding, modifications, rearrangements and cleavage as well as targeted degradation of pre-ribosomal RNA by the RNA exosome. This chain is Small ribosomal subunit protein eS7 (RpS7), found in Spodoptera frugiperda (Fall armyworm).